The primary structure comprises 476 residues: Monofunctional riboflavin biosynthesis protein RIBA 2, chloroplastic (476 aa).

Residues 1–54 constitute a chloroplast transit peptide; it reads MASLTLRCDSTHLLPSRDVVKGTKPFGTSLVYPRIISKKFNVRMRVIPEEGDVF. A DHBP synthase region spans residues 44–306; the sequence is MRVIPEEGDV…IADLIRYRRK (263 aa). D-ribulose 5-phosphate is bound by residues 130 to 131, Asp135, 245 to 249, and Glu269; these read RE and RAGHT. Position 131 (Glu131) interacts with Mg(2+). Residue His248 coordinates Mg(2+). The inactive GTP cyclohydrolase II stretch occupies residues 307–476; sequence RERLVEFTAV…SGKVPLITTP (170 aa). GTP is bound by residues 357–361, Gln376, 399–401, and Thr450; these read RVHAE and ESK.

It in the N-terminal section; belongs to the DHBP synthase family. The protein in the C-terminal section; belongs to the GTP cyclohydrolase II family. Requires Mg(2+) as cofactor. It depends on Mn(2+) as a cofactor. In terms of tissue distribution, expressed in leaves, shoots, roots, flowers and siliques.

The protein localises to the plastid. It is found in the chloroplast. It carries out the reaction D-ribulose 5-phosphate = (2S)-2-hydroxy-3-oxobutyl phosphate + formate + H(+). Its pathway is cofactor biosynthesis; riboflavin biosynthesis; 2-hydroxy-3-oxobutyl phosphate from D-ribulose 5-phosphate: step 1/1. Functionally, involved in riboflavin biosynthesis. Catalyzes the conversion of D-ribulose 5-phosphate to formate and 3,4-dihydroxy-2-butanone 4-phosphate. RIBA2 and RIBA3 together are not able to complement the loss of function of RIBA1. The sequence is that of Monofunctional riboflavin biosynthesis protein RIBA 2, chloroplastic (RIBA2) from Arabidopsis thaliana (Mouse-ear cress).